The following is a 932-amino-acid chain: Beta-mannosidase A (932 aa).

The N-terminal stretch at 1–19 (MRVPAQATIAVLASAVSSP) is a signal peptide. N-linked (GlcNAc...) asparagine glycosylation is found at N41, N81, N94, N249, N261, N284, N289, N318, and N348. Residue E480 is the Proton donor of the active site. 8 N-linked (GlcNAc...) asparagine glycosylation sites follow: N538, N551, N609, N624, N632, N659, N739, and N791.

Belongs to the glycosyl hydrolase 2 family. Beta-mannosidase A subfamily. As to quaternary structure, homodimer.

The protein localises to the secreted. The catalysed reaction is Hydrolysis of terminal, non-reducing beta-D-mannose residues in beta-D-mannosides.. It functions in the pathway glycan metabolism; N-glycan degradation. Its function is as follows. Exoglycosidase that cleaves the single beta-linked mannose residue from the non-reducing end of beta-mannosidic oligosaccharides of various complexity and length. Involved in the degradation of polymeric mannan and galactomannan. The polypeptide is Beta-mannosidase A (mndA) (Aspergillus terreus (strain NIH 2624 / FGSC A1156)).